The chain runs to 203 residues: Putative phosphoserine phosphatase 2 (203 aa).

Residue histidine 9 is the Tele-phosphohistidine intermediate of the active site. Histidine 149 is a catalytic residue.

This sequence belongs to the histidine phosphatase superfamily. Metal-independent phosphoserine phosphatase family. Heterodimer with PspA. The PspB subunit appears to have no or considerably lower PSP activity compared with that of PspA.

The enzyme catalyses O-phospho-L-serine + H2O = L-serine + phosphate. It catalyses the reaction O-phospho-D-serine + H2O = D-serine + phosphate. The protein operates within amino-acid biosynthesis; L-serine biosynthesis; L-serine from 3-phospho-D-glycerate: step 3/3. With respect to regulation, activity is not inhibited by EDTA in vitro, nor enhanced by the addition of Mg(2+). Part of a complex that catalyzes the dephosphorylation of L-phosphoserine to serine and inorganic phosphate. Is poorly or not active toward D-phosphoserine, DL-phosphothreonine, 3-phosphoglycerate, para-nitrophenylphosphate, and fructose-6-phosphate. Does not display phosphoglycerate mutase activity. This is Putative phosphoserine phosphatase 2 (pspB) from Hydrogenobacter thermophilus (strain DSM 6534 / IAM 12695 / TK-6).